The following is a 157-amino-acid chain: Methylglyoxal synthase (157 aa).

Residues 1–157 form the MGS-like domain; that stretch reads MSKVKNIAVV…DFSSYTQRKL (157 aa). Residues His12, Lys16, 38–41, and 71–72 contribute to the substrate site; these read TGTT and SG. The active-site Proton donor/acceptor is Asp77. His104 lines the substrate pocket.

This sequence belongs to the methylglyoxal synthase family.

The enzyme catalyses dihydroxyacetone phosphate = methylglyoxal + phosphate. Catalyzes the formation of methylglyoxal from dihydroxyacetone phosphate. The protein is Methylglyoxal synthase of Maridesulfovibrio salexigens (strain ATCC 14822 / DSM 2638 / NCIMB 8403 / VKM B-1763) (Desulfovibrio salexigens).